Consider the following 269-residue polypeptide: Phosphoribosylformylglycinamidine synthase subunit PurQ (269 aa).

Residues 5-262 form the Glutamine amidotransferase type-1 domain; the sequence is VLVMSGYGIN…IESNLQIFKN (258 aa). Cysteine 95 functions as the Nucleophile in the catalytic mechanism. Active-site residues include histidine 222, glutamate 224, and glutamate 232.

Part of the FGAM synthase complex composed of 1 PurL, 1 PurQ and 2 PurS subunits.

It localises to the cytoplasm. It catalyses the reaction N(2)-formyl-N(1)-(5-phospho-beta-D-ribosyl)glycinamide + L-glutamine + ATP + H2O = 2-formamido-N(1)-(5-O-phospho-beta-D-ribosyl)acetamidine + L-glutamate + ADP + phosphate + H(+). The enzyme catalyses L-glutamine + H2O = L-glutamate + NH4(+). It functions in the pathway purine metabolism; IMP biosynthesis via de novo pathway; 5-amino-1-(5-phospho-D-ribosyl)imidazole from N(2)-formyl-N(1)-(5-phospho-D-ribosyl)glycinamide: step 1/2. Its function is as follows. Part of the phosphoribosylformylglycinamidine synthase complex involved in the purines biosynthetic pathway. Catalyzes the ATP-dependent conversion of formylglycinamide ribonucleotide (FGAR) and glutamine to yield formylglycinamidine ribonucleotide (FGAM) and glutamate. The FGAM synthase complex is composed of three subunits. PurQ produces an ammonia molecule by converting glutamine to glutamate. PurL transfers the ammonia molecule to FGAR to form FGAM in an ATP-dependent manner. PurS interacts with PurQ and PurL and is thought to assist in the transfer of the ammonia molecule from PurQ to PurL. This chain is Phosphoribosylformylglycinamidine synthase subunit PurQ, found in Methanococcus maripaludis (strain C5 / ATCC BAA-1333).